Reading from the N-terminus, the 55-residue chain is Light-harvesting polypeptide B-800/860 beta chain (55 aa).

The Cytoplasmic segment spans residues Ala1–Thr21. Residues Tyr22–Ala44 traverse the membrane as a helical segment. His38 is an a bacteriochlorophyll binding site. Residues His45 to Ala55 lie on the Periplasmic side of the membrane.

It belongs to the antenna complex beta subunit family. The core complex is formed by different alpha and beta chains, binding bacteriochlorophyll molecules, and arranged most probably in tetrameric structures disposed around the reaction center. The non-pigmented gamma chains may constitute additional components.

It localises to the cell inner membrane. In terms of biological role, antenna complexes are light-harvesting systems, which transfer the excitation energy to the reaction centers. This is Light-harvesting polypeptide B-800/860 beta chain from Rhodocyclus tenuis (Rhodospirillum tenue).